The chain runs to 273 residues: Transmembrane protein 202 (273 aa).

4 helical membrane passes run 53–75, 121–141, 155–175, and 189–209; these read HIYI…IAMS, FFLI…SSWI, VSML…LFVA, and LLWT…AGII. Positions 242 to 273 are disordered; the sequence is TTVSPAKDEGPRSEMESLSVREKNLPKSGLWW. Over residues 247-266 the composition is skewed to basic and acidic residues; it reads AKDEGPRSEMESLSVREKNL.

It localises to the membrane. The sequence is that of Transmembrane protein 202 (TMEM202) from Homo sapiens (Human).